The sequence spans 299 residues: uncharacterized protein (299 aa).

Transmembrane regions (helical) follow at residues phenylalanine 32–leucine 52, serine 56–tyrosine 76, leucine 199–alanine 219, tyrosine 220–glutamate 240, phenylalanine 246–glycine 266, and phenylalanine 273–phenylalanine 293.

The protein resides in the cell membrane. This is an uncharacterized protein from Methanocaldococcus jannaschii (strain ATCC 43067 / DSM 2661 / JAL-1 / JCM 10045 / NBRC 100440) (Methanococcus jannaschii).